We begin with the raw amino-acid sequence, 221 residues long: Endo-1,4-beta-xylanase 11A (221 aa).

Positions 1-17 (MVSFTTLLTAVATAVSA) are cleaved as a signal peptide. One can recognise a GH11 domain in the interval 28 to 218 (RGIQPGTGVH…SSGSAEIEVR (191 aa)). An N-linked (GlcNAc...) asparagine glycan is attached at N89. Catalysis depends on E113, which acts as the Nucleophile. The Proton donor role is filled by E205.

Belongs to the glycosyl hydrolase 11 (cellulase G) family.

Its subcellular location is the secreted. It carries out the reaction Endohydrolysis of (1-&gt;4)-beta-D-xylosidic linkages in xylans.. It functions in the pathway glycan degradation; xylan degradation. With respect to regulation, retains an activity of 52.5% in the presence of 5 mM SDS. Its function is as follows. Endo-1,4-beta-xylanase involved in the hydrolysis of xylan, a major structural heterogeneous polysaccharide found in plant biomass representing the second most abundant polysaccharide in the biosphere, after cellulose. Is an alkali-tolerant enzyme, exhibiting 50.6% of activity at pH 9.0, and 26.9% even at pH 10.0. The polypeptide is Endo-1,4-beta-xylanase 11A (Humicola insolens (Soft-rot fungus)).